We begin with the raw amino-acid sequence, 428 residues long: Enolase (428 aa).

Gln173 lines the (2R)-2-phosphoglycerate pocket. The active-site Proton donor is the Glu217. Residues Asp253, Glu294, and Asp320 each contribute to the Mg(2+) site. (2R)-2-phosphoglycerate-binding residues include Lys345, Arg374, Ser375, and Lys396. Catalysis depends on Lys345, which acts as the Proton acceptor.

Belongs to the enolase family. Mg(2+) serves as cofactor.

It localises to the cytoplasm. It is found in the secreted. The protein localises to the cell surface. The catalysed reaction is (2R)-2-phosphoglycerate = phosphoenolpyruvate + H2O. It functions in the pathway carbohydrate degradation; glycolysis; pyruvate from D-glyceraldehyde 3-phosphate: step 4/5. In terms of biological role, catalyzes the reversible conversion of 2-phosphoglycerate (2-PG) into phosphoenolpyruvate (PEP). It is essential for the degradation of carbohydrates via glycolysis. The chain is Enolase from Methanosarcina mazei (strain ATCC BAA-159 / DSM 3647 / Goe1 / Go1 / JCM 11833 / OCM 88) (Methanosarcina frisia).